The primary structure comprises 932 residues: F-box protein COS111 (932 aa).

Residues 29 to 63 (VSAKHRPSSTGVYGHDASTVDHASRSNNNLNLTRS) form a disordered region. Residues 53 to 63 (RSNNNLNLTRS) are compositionally biased toward low complexity. One can recognise an F-box domain in the interval 146–193 (RKEISDLPDEVLRNILSNVKDDQRTLVNCLYVNKAFYNATKPTLYERP). Over residues 346-358 (LSEGKSSDNGNNG) the composition is skewed to polar residues. 4 disordered regions span residues 346 to 369 (LSEG…SVSS), 389 to 450 (TLSG…SNWF), 470 to 500 (ISSK…TEPF), and 863 to 893 (SVLP…SNDP). 2 stretches are compositionally biased toward low complexity: residues 395-431 (NNSS…SQID) and 438-447 (TSSKSTSSTS). The span at 876-890 (DDTNNGENTIAQPFS) shows a compositional bias: polar residues.

In terms of biological role, F-box protein probably involved in ubiquitin conjugation pathway. The sequence is that of F-box protein COS111 (COS111) from Candida glabrata (strain ATCC 2001 / BCRC 20586 / JCM 3761 / NBRC 0622 / NRRL Y-65 / CBS 138) (Yeast).